The chain runs to 925 residues: Calpain-B (925 aa).

A Calpain catalytic domain is found at 259–558; the sequence is MFEDPDFPAT…FDRVEICNLS (300 aa). Catalysis depends on residues Cys314, His470, and Asn498. The tract at residues 559–728 is domain III; sequence PDSLTEDQQH…TRNNMEENDD (170 aa). The tract at residues 723-753 is disordered; that stretch reads MEENDDEVGFGETDDRIAPSLPPPTPKEEDD. Residues 729–748 are linker; sequence EVGFGETDDRIAPSLPPPTP. The interval 749 to 925 is domain IV; it reads KEEDDPQRIA…DDWLERTIYS (177 aa). EF-hand domains follow at residues 796–831 and 826–861; these read FSKDAVRSMVAMLDKDRSGRLGFEEFEALLTDIAKW and TDIAKWRAVFKLYDTRRTGSIDGFHLRGALNSAGYH. Ca(2+) is bound by residues Asp809, Asp811, Ser813, Arg815, Glu820, Asp839, Thr843, Ser845, and His850.

The protein belongs to the peptidase C2 family. Undergoes calcium-dependent autolytic cleavage between Asn-74 and Ala-75 and between Gln-224 and Asn-225 to produce two major products, calpain B catalytic subunit 1 and calpain B catalytic subunit 2. This autolysis is necessary for activation of the protein. As to expression, strongly expressed in follicular and border cells of the oocyte. Ubiquitously expressed in early embryos. Localized to the trachea and their orifices, and to the larynx of late embryos. Restricted to the salivary gland in third instar larvae.

It is found in the cytoplasm. The protein resides in the membrane. With respect to regulation, activated by millimolar concentrations of calcium. Functionally, calcium-regulated non-lysosomal thiol-protease. The chain is Calpain-B from Drosophila melanogaster (Fruit fly).